Here is a 134-residue protein sequence, read N- to C-terminus: Holo-[acyl-carrier-protein] synthase (134 aa).

2 residues coordinate Mg(2+): Asp8 and Glu57.

The protein belongs to the P-Pant transferase superfamily. AcpS family. Mg(2+) serves as cofactor.

It is found in the cytoplasm. It catalyses the reaction apo-[ACP] + CoA = holo-[ACP] + adenosine 3',5'-bisphosphate + H(+). Its function is as follows. Transfers the 4'-phosphopantetheine moiety from coenzyme A to a Ser of acyl-carrier-protein. This Rhizobium etli (strain ATCC 51251 / DSM 11541 / JCM 21823 / NBRC 15573 / CFN 42) protein is Holo-[acyl-carrier-protein] synthase.